A 276-amino-acid polypeptide reads, in one-letter code: 2-dehydro-3-deoxyphosphooctonate aldolase (276 aa).

It belongs to the KdsA family.

Its subcellular location is the cytoplasm. It carries out the reaction D-arabinose 5-phosphate + phosphoenolpyruvate + H2O = 3-deoxy-alpha-D-manno-2-octulosonate-8-phosphate + phosphate. The protein operates within carbohydrate biosynthesis; 3-deoxy-D-manno-octulosonate biosynthesis; 3-deoxy-D-manno-octulosonate from D-ribulose 5-phosphate: step 2/3. In Stenotrophomonas maltophilia (strain K279a), this protein is 2-dehydro-3-deoxyphosphooctonate aldolase.